A 419-amino-acid chain; its full sequence is Enolase (419 aa).

Q161 provides a ligand contact to (2R)-2-phosphoglycerate. The Proton donor role is filled by E205. Mg(2+) is bound by residues D240, E283, and D309. (2R)-2-phosphoglycerate-binding residues include K334, R363, S364, and K385. K334 (proton acceptor) is an active-site residue.

This sequence belongs to the enolase family. Mg(2+) is required as a cofactor.

The protein resides in the cytoplasm. It localises to the secreted. Its subcellular location is the cell surface. The enzyme catalyses (2R)-2-phosphoglycerate = phosphoenolpyruvate + H2O. Its pathway is carbohydrate degradation; glycolysis; pyruvate from D-glyceraldehyde 3-phosphate: step 4/5. Catalyzes the reversible conversion of 2-phosphoglycerate (2-PG) into phosphoenolpyruvate (PEP). It is essential for the degradation of carbohydrates via glycolysis. The polypeptide is Enolase (Saccharolobus islandicus (strain Y.G.57.14 / Yellowstone #1) (Sulfolobus islandicus)).